We begin with the raw amino-acid sequence, 456 residues long: Enolase (456 aa).

Residue glutamine 177 participates in (2R)-2-phosphoglycerate binding. The Proton donor role is filled by glutamate 219. 3 residues coordinate Mg(2+): aspartate 256, glutamate 310, and aspartate 337. Residues lysine 362, arginine 391, serine 392, and lysine 413 each coordinate (2R)-2-phosphoglycerate. The active-site Proton acceptor is lysine 362.

It belongs to the enolase family. In terms of assembly, homodimer. Mg(2+) is required as a cofactor.

It is found in the cytoplasm. Its subcellular location is the secreted. It localises to the cell surface. It catalyses the reaction (2R)-2-phosphoglycerate = phosphoenolpyruvate + H2O. It functions in the pathway carbohydrate degradation; glycolysis; pyruvate from D-glyceraldehyde 3-phosphate: step 4/5. Its function is as follows. Catalyzes the reversible conversion of 2-phosphoglycerate (2-PG) into phosphoenolpyruvate (PEP). It is essential for the degradation of carbohydrates via glycolysis. 'Moonlights' as a plasminogen receptor. Binds plasminogen, but no fibronectin binding was observed. Plasminogen binding increases bacterial adherence to host cells; plasmin activity leads to degradation of host extracellular matrix proteins, facilitating bacterial dissemination and disease spread. This Mycoplasma pneumoniae (strain ATCC 29342 / M129 / Subtype 1) (Mycoplasmoides pneumoniae) protein is Enolase.